A 459-amino-acid chain; its full sequence is Cell division protein FtsZ (459 aa).

Residues 25-29, 112-114, Glu-143, Arg-147, and Asp-191 contribute to the GTP site; these read GAGSN and GTG. Disordered regions lie at residues 383 to 405 and 427 to 459; these read DQAPNSTNDDMEPRVSLTNDAGE and IPERKNVVVGMPDEETKESDIHDIPAFLRKKRD.

This sequence belongs to the FtsZ family. In terms of assembly, homodimer. Polymerizes to form a dynamic ring structure in a strictly GTP-dependent manner. Interacts directly with several other division proteins.

Its subcellular location is the cytoplasm. Essential cell division protein that forms a contractile ring structure (Z ring) at the future cell division site. The regulation of the ring assembly controls the timing and the location of cell division. One of the functions of the FtsZ ring is to recruit other cell division proteins to the septum to produce a new cell wall between the dividing cells. Binds GTP and shows GTPase activity. The sequence is that of Cell division protein FtsZ from Rickettsia bellii (strain RML369-C).